The chain runs to 377 residues: uncharacterized protein (377 aa).

The helical transmembrane segment at 21-43 (YFISFSALFLIAYMFVAAVPLGA) threads the bilayer.

It is found in the membrane. This is an uncharacterized protein from Treponema pallidum (strain Nichols).